Here is a 430-residue protein sequence, read N- to C-terminus: Enolase (430 aa).

Q167 is a (2R)-2-phosphoglycerate binding site. E209 serves as the catalytic Proton donor. Residues D246, E287, and D314 each contribute to the Mg(2+) site. The (2R)-2-phosphoglycerate site is built by K339, R368, S369, and K390. K339 functions as the Proton acceptor in the catalytic mechanism.

The protein belongs to the enolase family. Requires Mg(2+) as cofactor.

It is found in the cytoplasm. It localises to the secreted. The protein localises to the cell surface. It carries out the reaction (2R)-2-phosphoglycerate = phosphoenolpyruvate + H2O. It participates in carbohydrate degradation; glycolysis; pyruvate from D-glyceraldehyde 3-phosphate: step 4/5. Catalyzes the reversible conversion of 2-phosphoglycerate (2-PG) into phosphoenolpyruvate (PEP). It is essential for the degradation of carbohydrates via glycolysis. The polypeptide is Enolase (Prochlorococcus marinus (strain MIT 9215)).